The following is a 164-amino-acid chain: MSITFGELVGNFILVTGSVIVLLLLIKKFAWGAIESILQTRSQQISRDIDQAEQSRLSAQQLETKSQANLDASRSQASKIISDAKEIGQLQGDKLVAEATDEAKRLKEKALTDIEQSKSDAISAVKTEMSDLTVLLAEKIMGANLDKTAQSQLIDSYLDDLGEA.

A helical transmembrane segment spans residues 6–26 (GELVGNFILVTGSVIVLLLLI).

Belongs to the ATPase B chain family. F-type ATPases have 2 components, F(1) - the catalytic core - and F(0) - the membrane proton channel. F(1) has five subunits: alpha(3), beta(3), gamma(1), delta(1), epsilon(1). F(0) has three main subunits: a(1), b(2) and c(10-14). The alpha and beta chains form an alternating ring which encloses part of the gamma chain. F(1) is attached to F(0) by a central stalk formed by the gamma and epsilon chains, while a peripheral stalk is formed by the delta and b chains.

The protein resides in the cell membrane. In terms of biological role, f(1)F(0) ATP synthase produces ATP from ADP in the presence of a proton or sodium gradient. F-type ATPases consist of two structural domains, F(1) containing the extramembraneous catalytic core and F(0) containing the membrane proton channel, linked together by a central stalk and a peripheral stalk. During catalysis, ATP synthesis in the catalytic domain of F(1) is coupled via a rotary mechanism of the central stalk subunits to proton translocation. Functionally, component of the F(0) channel, it forms part of the peripheral stalk, linking F(1) to F(0). The protein is ATP synthase subunit b of Streptococcus pyogenes serotype M6 (strain ATCC BAA-946 / MGAS10394).